The sequence spans 93 residues: Large ribosomal subunit protein uL23cz/uL23cy (93 aa).

This sequence belongs to the universal ribosomal protein uL23 family. Part of the 50S ribosomal subunit.

The protein resides in the plastid. It is found in the chloroplast. Functionally, binds to 23S rRNA. The sequence is that of Large ribosomal subunit protein uL23cz/uL23cy (rpl23-A) from Arabidopsis thaliana (Mouse-ear cress).